The primary structure comprises 522 residues: 2-isopropylmalate synthase (522 aa).

Positions 5 to 267 (VIIFDTTLRD…ETGINAKEIH (263 aa)) constitute a Pyruvate carboxyltransferase domain. Residues Asp-14, His-202, His-204, and Asn-238 each contribute to the Mn(2+) site. A regulatory domain region spans residues 392 to 522 (QLQQLVVQSD…MQKNRELGGV (131 aa)).

This sequence belongs to the alpha-IPM synthase/homocitrate synthase family. LeuA type 1 subfamily. As to quaternary structure, homodimer. Mn(2+) is required as a cofactor.

The protein resides in the cytoplasm. The catalysed reaction is 3-methyl-2-oxobutanoate + acetyl-CoA + H2O = (2S)-2-isopropylmalate + CoA + H(+). The protein operates within amino-acid biosynthesis; L-leucine biosynthesis; L-leucine from 3-methyl-2-oxobutanoate: step 1/4. Catalyzes the condensation of the acetyl group of acetyl-CoA with 3-methyl-2-oxobutanoate (2-ketoisovalerate) to form 3-carboxy-3-hydroxy-4-methylpentanoate (2-isopropylmalate). This is 2-isopropylmalate synthase from Shewanella baltica (strain OS223).